A 338-amino-acid polypeptide reads, in one-letter code: Phenylalanine--tRNA ligase alpha subunit (338 aa).

Residue Glu259 participates in Mg(2+) binding.

This sequence belongs to the class-II aminoacyl-tRNA synthetase family. Phe-tRNA synthetase alpha subunit type 1 subfamily. In terms of assembly, tetramer of two alpha and two beta subunits. The cofactor is Mg(2+).

Its subcellular location is the cytoplasm. The catalysed reaction is tRNA(Phe) + L-phenylalanine + ATP = L-phenylalanyl-tRNA(Phe) + AMP + diphosphate + H(+). The polypeptide is Phenylalanine--tRNA ligase alpha subunit (Herminiimonas arsenicoxydans).